A 375-amino-acid chain; its full sequence is MERASCLLLLLLPLVHVSATTPEPCELDDEDFRCVCNFSEPQPDWSEAFQCVSAVEVEIHAGGLNLEPFLKRVDADADPRQYADTVKALRVRRLTVGAAQVPAQLLVGALRVLAYSRLKELTLEDLKITGTMPPLPLEATGLALSSLRLRNVSWATGRSWLAELQQWLKPGLKVLSIAQAHSPAFSCEQVRAFPALTSLDLSDNPGLGERGLMAALCPHKFPAIQNLALRNTGMETPTGVCAALAAAGVQPHSLDLSHNSLRATVNPSAPRCMWSSALNSLNLSFAGLEQVPKGLPAKLRVLDLSCNRLNRAPQPDELPEVDNLTLDGNPFLVPGTALPHEGSMNSGVVPACARSTLSVGVSGTLVLLQGARGFA.

Positions 1–19 (MERASCLLLLLLPLVHVSA) are cleaved as a signal peptide. 2 disulfide bridges follow: Cys25/Cys36 and Cys34/Cys51. N-linked (GlcNAc...) asparagine glycosylation is present at Asn37. LRR repeat units lie at residues 54-82 (AVEV…PRQY), 83-118 (ADTV…YSRL), 119-144 (KELT…GLAL), 145-172 (SSLR…KPGL), 173-196 (KVLS…FPAL), 197-224 (TSLD…FPAI), 225-251 (QNLA…GVQP), 252-278 (HSLD…SSAL), 279-299 (NSLN…PAKL), 300-321 (RVLD…LPEV), and 322-349 (DNLT…SGVV). Asn151 carries N-linked (GlcNAc...) asparagine glycosylation. Disulfide bonds link Cys187/Cys217 and Cys241/Cys272. A glycan (N-linked (GlcNAc...) asparagine) is linked at Asn282. Positions 290–375 (QVPKGLPAKL…VLLQGARGFA (86 aa)) are required for response to bacterial lipopolysaccharide (LPS). Asn323 carries N-linked (GlcNAc...) asparagine glycosylation. O-linked (GalNAc...) threonine glycosylation occurs at Thr336. A lipid anchor (GPI-anchor amidated asparagine) is attached at Asn345. Positions 346–375 (SGVVPACARSTLSVGVSGTLVLLQGARGFA) are cleaved as a propeptide — removed in mature form.

As to quaternary structure, interacts with LPS-bound LPB. Belongs to the lipopolysaccharide (LPS) receptor, a multi-protein complex containing at least CD14, LY96 and TLR4. Interacts with LPAR1. Interacts with the TLR2:TLR6 or TLR2:TLR1 heterodimers; upon interaction with ligands such as diacylated lipopeptides and triacylated lipopeptides, respectively. Interacts with MYO18A. Interacts with FSTL1. N- and O- glycosylated. O-glycosylated with a core 1 or possibly core 8 glycan. In terms of tissue distribution, detected on macrophages (at protein level). Expressed strongly on the surface of monocytes and weakly on the surface of granulocytes; also expressed by most tissue macrophages.

The protein resides in the cell membrane. It is found in the secreted. The protein localises to the membrane raft. Its subcellular location is the golgi apparatus. Functionally, coreceptor for bacterial lipopolysaccharide. In concert with LBP, binds to monomeric lipopolysaccharide and delivers it to the LY96/TLR4 complex, thereby mediating the innate immune response to bacterial lipopolysaccharide (LPS). Acts via MyD88, TIRAP and TRAF6, leading to NF-kappa-B activation, cytokine secretion and the inflammatory response. Acts as a coreceptor for TLR2:TLR6 heterodimer in response to diacylated lipopeptides and for TLR2:TLR1 heterodimer in response to triacylated lipopeptides, these clusters trigger signaling from the cell surface and subsequently are targeted to the Golgi in a lipid-raft dependent pathway. Binds electronegative LDL (LDL(-)) and mediates the cytokine release induced by LDL(-). In Homo sapiens (Human), this protein is Monocyte differentiation antigen CD14 (CD14).